The chain runs to 256 residues: Phosphatidylglycerol--prolipoprotein diacylglyceryl transferase (256 aa).

Helical transmembrane passes span 19–39 (VHWY…LGYW), 56–76 (LIFY…MLFY), and 91–111 (IWEG…AAWL). R139 lines the a 1,2-diacyl-sn-glycero-3-phospho-(1'-sn-glycerol) pocket. Residues 231-251 (FGWLTMGQVLSIPMLLIGIWL) form a helical membrane-spanning segment.

Belongs to the Lgt family.

Its subcellular location is the cell inner membrane. The catalysed reaction is L-cysteinyl-[prolipoprotein] + a 1,2-diacyl-sn-glycero-3-phospho-(1'-sn-glycerol) = an S-1,2-diacyl-sn-glyceryl-L-cysteinyl-[prolipoprotein] + sn-glycerol 1-phosphate + H(+). The protein operates within protein modification; lipoprotein biosynthesis (diacylglyceryl transfer). Catalyzes the transfer of the diacylglyceryl group from phosphatidylglycerol to the sulfhydryl group of the N-terminal cysteine of a prolipoprotein, the first step in the formation of mature lipoproteins. This is Phosphatidylglycerol--prolipoprotein diacylglyceryl transferase from Legionella pneumophila (strain Lens).